The chain runs to 122 residues: Small ribosomal subunit protein uS13 (122 aa).

Positions 91-122 are disordered; it reads RHRRGLPVHGQRTKTNARTRKGPKRTVAGKKK.

This sequence belongs to the universal ribosomal protein uS13 family. In terms of assembly, part of the 30S ribosomal subunit. Forms a loose heterodimer with protein S19. Forms two bridges to the 50S subunit in the 70S ribosome.

In terms of biological role, located at the top of the head of the 30S subunit, it contacts several helices of the 16S rRNA. In the 70S ribosome it contacts the 23S rRNA (bridge B1a) and protein L5 of the 50S subunit (bridge B1b), connecting the 2 subunits; these bridges are implicated in subunit movement. Contacts the tRNAs in the A and P-sites. This is Small ribosomal subunit protein uS13 from Kocuria rhizophila (strain ATCC 9341 / DSM 348 / NBRC 103217 / DC2201).